The following is a 591-amino-acid chain: Aspartate--tRNA(Asp/Asn) ligase (591 aa).

Residue E174 participates in L-aspartate binding. The segment at 198–201 is aspartate; the sequence is QLFK. L-aspartate is bound at residue R220. ATP contacts are provided by residues 220 to 222 and Q229; that span reads RDE. H450 contributes to the L-aspartate binding site. E483 is an ATP binding site. R490 is an L-aspartate binding site. 535 to 538 lines the ATP pocket; that stretch reads GLDR.

Belongs to the class-II aminoacyl-tRNA synthetase family. Type 1 subfamily. Homodimer.

Its subcellular location is the cytoplasm. It carries out the reaction tRNA(Asx) + L-aspartate + ATP = L-aspartyl-tRNA(Asx) + AMP + diphosphate. Functionally, aspartyl-tRNA synthetase with relaxed tRNA specificity since it is able to aspartylate not only its cognate tRNA(Asp) but also tRNA(Asn). Reaction proceeds in two steps: L-aspartate is first activated by ATP to form Asp-AMP and then transferred to the acceptor end of tRNA(Asp/Asn). This is Aspartate--tRNA(Asp/Asn) ligase from Pseudomonas putida (strain GB-1).